Consider the following 217-residue polypeptide: LexA repressor (217 aa).

The H-T-H motif DNA-binding region spans 28-48 (RAEIAAEFGFSSPNAAEEHLR). Active-site for autocatalytic cleavage activity residues include serine 136 and lysine 173.

This sequence belongs to the peptidase S24 family. In terms of assembly, homodimer.

The catalysed reaction is Hydrolysis of Ala-|-Gly bond in repressor LexA.. Functionally, represses a number of genes involved in the response to DNA damage (SOS response), including recA and lexA. In the presence of single-stranded DNA, RecA interacts with LexA causing an autocatalytic cleavage which disrupts the DNA-binding part of LexA, leading to derepression of the SOS regulon and eventually DNA repair. The polypeptide is LexA repressor (Cupriavidus taiwanensis (strain DSM 17343 / BCRC 17206 / CCUG 44338 / CIP 107171 / LMG 19424 / R1) (Ralstonia taiwanensis (strain LMG 19424))).